Reading from the N-terminus, the 310-residue chain is Protoheme IX farnesyltransferase 2 (310 aa).

The next 9 helical transmembrane spans lie at 25–45, 49–69, 98–118, 121–141, 145–165, 176–196, 222–242, 245–265, and 277–297; these read PGIIFGNLISVAGGFLLAAKG, LVLMLASLVGLSLVVASGCAI, HVLLFGIAIGVLGFGILALFT, LALLFAAIGYVVYVGIYSLYM, SVYGTLVGSFSGAVPPVVGYC, VILLLMFSLWQMPHSYAIAIF, IVLYIAVFALVSTMLPLAGYT, AFMAVTCATSLWWLTMALKGY, and QVFGFSIITITALSVTMALDF.

Belongs to the UbiA prenyltransferase family. Protoheme IX farnesyltransferase subfamily.

The protein localises to the cell inner membrane. It catalyses the reaction heme b + (2E,6E)-farnesyl diphosphate + H2O = Fe(II)-heme o + diphosphate. It functions in the pathway porphyrin-containing compound metabolism; heme O biosynthesis; heme O from protoheme: step 1/1. In terms of biological role, converts heme B (protoheme IX) to heme O by substitution of the vinyl group on carbon 2 of heme B porphyrin ring with a hydroxyethyl farnesyl side group. The protein is Protoheme IX farnesyltransferase 2 of Shewanella sp. (strain MR-7).